We begin with the raw amino-acid sequence, 560 residues long: Protein GAT2 (560 aa).

Disordered stretches follow at residues 274-297 (RQQE…FSNK), 345-383 (FLST…ISSS), and 412-461 (LNTK…SDEK). Over residues 347–361 (STSSSSPSPTAGSAP) the composition is skewed to low complexity. Positions 369-378 (RQDDPNDKKM) are enriched in basic and acidic residues. Over residues 414–425 (TKKKNNRGRPRA) the composition is skewed to basic residues. Residues 428 to 456 (RQPTLTTSSHFINNSNPGAAAVSTTTPAA) show a composition bias toward polar residues. A GATA-type zinc finger spans residues 472-497 (CFHCGETETPEWRKGPYGTRTLCNAC).

The polypeptide is Protein GAT2 (GAT2) (Saccharomyces cerevisiae (strain ATCC 204508 / S288c) (Baker's yeast)).